Here is a 478-residue protein sequence, read N- to C-terminus: MESKALLLVALSVWLQSLIVSREGLATADRISGGRDFTDIESKFALRTPEDTVEDTCHLIPGVTESVANCHFNHSSKTFVVIHGWTVTGMYESWVPKLVAALYKREPDSNVIVVDWLSRAQQHYPISAGYTKLVGQDVATFIDWMAVEFSYPPNNVHLLGYSLGAHAAGIAGSLTKKKVNRITGLDPAGPNFEYAEAPSRLSPDDADFVDVLHTFTRGSPGRSIGIQKPVGHVDIYPNGGTFQPGCNIGEAIRVIAERGLGDVDQLVKCSHERSIHLFIDSLLNEENPSKAYRCNSKEAFEKGLCLSCRKNRCNNLGYEINKVRAKRSSKMYLKTRAQMPYKVFHYQVKMRFSGTESDTHTNQAFEISLYGTVAESENIPFTLPEVSTNKTYSFLIYTEVDIGELLMLKLKWVSDSYFSWSNWWSSPGFAIEKIRVKAGETQKKVIFCSREKKSHLQKGKSSVVFVKCHDKSLNRKSG.

Positions 1–27 (MESKALLLVALSVWLQSLIVSREGLAT) are cleaved as a signal peptide. The interaction with GPIHBP1 stretch occupies residues 35 to 56 (RDFTDIESKFALRTPEDTVEDT). An intrachain disulfide couples Cys57 to Cys70. N-linked (GlcNAc...) asparagine glycosylation occurs at Asn73. Tyr124 is subject to 3'-nitrotyrosine. The active-site Nucleophile is the Ser162. Catalysis depends on Asp186, which acts as the Charge relay system. Residue Tyr194 is modified to 3'-nitrotyrosine. Positions 197, 200, 202, and 205 each coordinate Ca(2+). Cysteines 246 and 269 form a disulfide. The essential for determining substrate specificity stretch occupies residues 246-269 (CNIGEAIRVIAERGLGDVDQLVKC). His271 serves as the catalytic Charge relay system. Intrachain disulfides connect Cys294–Cys313 and Cys305–Cys308. Positions 344-467 (FHYQVKMRFS…KGKSSVVFVK (124 aa)) constitute a PLAT domain. The residue at position 346 (Tyr346) is a 3'-nitrotyrosine. Asn389 carries an N-linked (GlcNAc...) asparagine glycan. Positions 420 to 424 (WSNWW) are important for interaction with lipoprotein particles. An important for heparin binding region spans residues 433-437 (KIRVK). Residues 446 to 470 (IFCSREKKSHLQKGKSSVVFVKCHD) form an interaction with GPIHBP1 region. Cys448 and Cys468 are joined by a disulfide.

This sequence belongs to the AB hydrolase superfamily. Lipase family. In terms of assembly, homodimer. Interacts with GPIHBP1 with 1:1 stoichiometry. Interacts with APOC2; the interaction activates LPL activity in the presence of lipids. Interaction with heparan sulfate proteoglycans is required to protect LPL against loss of activity. Associates with lipoprotein particles in blood plasma. Interacts with LMF1 and SEL1L; interaction with SEL1L is required to prevent aggregation of newly synthesized LPL in the endoplasmic reticulum (ER), and for normal export of LPL from the ER to the extracellular space. Interacts with SORL1; SORL1 acts as a sorting receptor, promoting LPL localization to endosomes and later to lysosomes, leading to degradation of newly synthesized LPL. In terms of processing, tyrosine nitration after lipopolysaccharide (LPS) challenge down-regulates the lipase activity.

It is found in the cell membrane. It localises to the secreted. The protein localises to the extracellular space. The protein resides in the extracellular matrix. The catalysed reaction is a triacylglycerol + H2O = a diacylglycerol + a fatty acid + H(+). It carries out the reaction a 1,2-diacyl-sn-glycero-3-phosphocholine + H2O = a 2-acyl-sn-glycero-3-phosphocholine + a fatty acid + H(+). The enzyme catalyses 1,2,3-tri-(9Z-octadecenoyl)-glycerol + H2O = di-(9Z)-octadecenoylglycerol + (9Z)-octadecenoate + H(+). It catalyses the reaction 1,2-di-(9Z-octadecenoyl)-sn-glycero-3-phosphocholine + H2O = (9Z-octadecenoyl)-sn-glycero-3-phosphocholine + (9Z)-octadecenoate + H(+). The catalysed reaction is 1,2,3-tributanoylglycerol + H2O = dibutanoylglycerol + butanoate + H(+). It carries out the reaction 1,2-dihexadecanoyl-sn-glycero-3-phosphocholine + H2O = hexadecanoyl-sn-glycero-3-phosphocholine + hexadecanoate + H(+). The apolipoprotein APOC2 acts as a coactivator of LPL activity. Ca(2+) binding promotes protein stability and formation of the active homodimer. Interaction with GPIHBP1 protects LPL against inactivation by ANGPTL4. Key enzyme in triglyceride metabolism. Catalyzes the hydrolysis of triglycerides from circulating chylomicrons and very low density lipoproteins (VLDL), and thereby plays an important role in lipid clearance from the blood stream, lipid utilization and storage. Although it has both phospholipase and triglyceride lipase activities it is primarily a triglyceride lipase with low but detectable phospholipase activity. Mediates margination of triglyceride-rich lipoprotein particles in capillaries. Recruited to its site of action on the luminal surface of vascular endothelium by binding to GPIHBP1 and cell surface heparan sulfate proteoglycans. The polypeptide is Lipoprotein lipase (LPL) (Sus scrofa (Pig)).